The primary structure comprises 362 residues: Probable dual-specificity RNA methyltransferase RlmN (362 aa).

Glu105 functions as the Proton acceptor in the catalytic mechanism. In terms of domain architecture, Radical SAM core spans 111-344 (HEYGNSICVT…VTIRREQGHD (234 aa)). Cysteines 118 and 349 form a disulfide. Positions 125, 129, and 132 each coordinate [4Fe-4S] cluster. S-adenosyl-L-methionine contacts are provided by residues 175 to 176 (GE), Ser207, 230 to 232 (SLH), and Asn306. Cys349 serves as the catalytic S-methylcysteine intermediate.

It belongs to the radical SAM superfamily. RlmN family. Requires [4Fe-4S] cluster as cofactor.

It is found in the cytoplasm. It catalyses the reaction adenosine(2503) in 23S rRNA + 2 reduced [2Fe-2S]-[ferredoxin] + 2 S-adenosyl-L-methionine = 2-methyladenosine(2503) in 23S rRNA + 5'-deoxyadenosine + L-methionine + 2 oxidized [2Fe-2S]-[ferredoxin] + S-adenosyl-L-homocysteine. The catalysed reaction is adenosine(37) in tRNA + 2 reduced [2Fe-2S]-[ferredoxin] + 2 S-adenosyl-L-methionine = 2-methyladenosine(37) in tRNA + 5'-deoxyadenosine + L-methionine + 2 oxidized [2Fe-2S]-[ferredoxin] + S-adenosyl-L-homocysteine. Functionally, specifically methylates position 2 of adenine 2503 in 23S rRNA and position 2 of adenine 37 in tRNAs. This is Probable dual-specificity RNA methyltransferase RlmN from Bacillus anthracis (strain A0248).